The sequence spans 294 residues: Cell division control protein 2 homolog 2 (294 aa).

The region spanning 4-287 (YEKVEKIGEG…ARGALEHEYF (284 aa)) is the Protein kinase domain. Residues 10 to 18 (IGEGTYGVV) and K33 each bind ATP. T14 carries the phosphothreonine modification. Y15 is modified (phosphotyrosine). D127 serves as the catalytic Proton acceptor. T161 bears the Phosphothreonine; by CAK mark.

It belongs to the protein kinase superfamily. CMGC Ser/Thr protein kinase family. CDC2/CDKX subfamily. As to expression, found in most organs including root, young leaf, stem, vegetative meristem and flower bud.

The catalysed reaction is L-seryl-[protein] + ATP = O-phospho-L-seryl-[protein] + ADP + H(+). The enzyme catalyses L-threonyl-[protein] + ATP = O-phospho-L-threonyl-[protein] + ADP + H(+). Its activity is regulated as follows. Phosphorylation at Thr-14 or Tyr-15 inactivates the enzyme, while phosphorylation at Thr-161 activates it. Plays a key role in the control of the eukaryotic cell cycle. Component of the kinase complex that phosphorylates the repetitive C-terminus of RNA polymerase II. The sequence is that of Cell division control protein 2 homolog 2 (CDC2B) from Medicago sativa (Alfalfa).